The sequence spans 224 residues: V-type ATP synthase subunit D (224 aa).

Residues alanine 205–isoleucine 214 are compositionally biased toward basic and acidic residues. A disordered region spans residues alanine 205–aspartate 224. A compositionally biased stretch (polar residues) spans glutamine 215–aspartate 224.

Belongs to the V-ATPase D subunit family.

Functionally, produces ATP from ADP in the presence of a proton gradient across the membrane. This chain is V-type ATP synthase subunit D, found in Deinococcus deserti (strain DSM 17065 / CIP 109153 / LMG 22923 / VCD115).